Consider the following 227-residue polypeptide: Enolase-phosphatase E1 (227 aa).

The protein belongs to the HAD-like hydrolase superfamily. MasA/MtnC family. In terms of assembly, monomer. Mg(2+) serves as cofactor.

It catalyses the reaction 5-methylsulfanyl-2,3-dioxopentyl phosphate + H2O = 1,2-dihydroxy-5-(methylsulfanyl)pent-1-en-3-one + phosphate. It functions in the pathway amino-acid biosynthesis; L-methionine biosynthesis via salvage pathway; L-methionine from S-methyl-5-thio-alpha-D-ribose 1-phosphate: step 3/6. The protein operates within amino-acid biosynthesis; L-methionine biosynthesis via salvage pathway; L-methionine from S-methyl-5-thio-alpha-D-ribose 1-phosphate: step 4/6. In terms of biological role, bifunctional enzyme that catalyzes the enolization of 2,3-diketo-5-methylthiopentyl-1-phosphate (DK-MTP-1-P) into the intermediate 2-hydroxy-3-keto-5-methylthiopentenyl-1-phosphate (HK-MTPenyl-1-P), which is then dephosphorylated to form the acireductone 1,2-dihydroxy-3-keto-5-methylthiopentene (DHK-MTPene). The sequence is that of Enolase-phosphatase E1 from Azotobacter vinelandii (strain DJ / ATCC BAA-1303).